The primary structure comprises 72 residues: Translation initiation factor IF-1 (72 aa).

The region spanning 1-72 is the S1-like domain; the sequence is MAKDDVIQMQ…SRARIVFRTK (72 aa).

This sequence belongs to the IF-1 family. As to quaternary structure, component of the 30S ribosomal translation pre-initiation complex which assembles on the 30S ribosome in the order IF-2 and IF-3, IF-1 and N-formylmethionyl-tRNA(fMet); mRNA recruitment can occur at any time during PIC assembly.

Its subcellular location is the cytoplasm. Functionally, one of the essential components for the initiation of protein synthesis. Stabilizes the binding of IF-2 and IF-3 on the 30S subunit to which N-formylmethionyl-tRNA(fMet) subsequently binds. Helps modulate mRNA selection, yielding the 30S pre-initiation complex (PIC). Upon addition of the 50S ribosomal subunit IF-1, IF-2 and IF-3 are released leaving the mature 70S translation initiation complex. The sequence is that of Translation initiation factor IF-1 from Herminiimonas arsenicoxydans.